A 520-amino-acid polypeptide reads, in one-letter code: Hydroxymethylglutaryl-CoA synthase, cytoplasmic (520 aa).

Ser4 bears the Phosphoserine mark. Ala44 lines the (3S)-3-hydroxy-3-methylglutaryl-CoA pocket. A CoA-binding site is contributed by 44 to 46 (AGK). Position 46 is an N6-acetyllysine (Lys46). Glu95 (proton donor/acceptor) is an active-site residue. Residues Cys129, Asn167, Thr171, Ser221, and His264 each coordinate (3S)-3-hydroxy-3-methylglutaryl-CoA. Cys129 functions as the Acyl-thioester intermediate in the catalytic mechanism. Asn167 is a CoA binding site. Ser221 provides a ligand contact to CoA. The Proton donor/acceptor role is filled by His264. The CoA site is built by Lys269 and Lys273. Residues Lys273, Asn343, and Ser377 each coordinate (3S)-3-hydroxy-3-methylglutaryl-CoA. Lys273 is subject to N6-acetyllysine. Thr476 carries the phosphothreonine modification. Residues 492–520 (HIPSPAKKVPRLPATAAEPEAAVISNGEH) form a disordered region. Ser495 and Ser516 each carry phosphoserine.

Belongs to the thiolase-like superfamily. HMG-CoA synthase family. As to quaternary structure, homodimer.

It is found in the cytoplasm. It catalyses the reaction acetoacetyl-CoA + acetyl-CoA + H2O = (3S)-3-hydroxy-3-methylglutaryl-CoA + CoA + H(+). It participates in metabolic intermediate biosynthesis; (R)-mevalonate biosynthesis; (R)-mevalonate from acetyl-CoA: step 2/3. Its function is as follows. Catalyzes the condensation of acetyl-CoA with acetoacetyl-CoA to form HMG-CoA, which is converted by HMG-CoA reductase (HMGCR) into mevalonate, a precursor for cholesterol synthesis. The sequence is that of Hydroxymethylglutaryl-CoA synthase, cytoplasmic from Pongo abelii (Sumatran orangutan).